We begin with the raw amino-acid sequence, 552 residues long: Urocanate hydratase (552 aa).

NAD(+) contacts are provided by residues 49-50 (GG), Q127, 173-175 (GMG), D193, 239-240 (NA), 260-264 (QTSAH), 270-271 (YI), and Y319. C407 is an active-site residue. G489 lines the NAD(+) pocket.

The protein belongs to the urocanase family. It depends on NAD(+) as a cofactor.

The protein resides in the cytoplasm. It catalyses the reaction 4-imidazolone-5-propanoate = trans-urocanate + H2O. It functions in the pathway amino-acid degradation; L-histidine degradation into L-glutamate; N-formimidoyl-L-glutamate from L-histidine: step 2/3. Functionally, catalyzes the conversion of urocanate to 4-imidazolone-5-propionate. The protein is Urocanate hydratase of Bacillus cereus (strain AH820).